Consider the following 661-residue polypeptide: Solute carrier organic anion transporter family member 1A4 (661 aa).

Over 1–20 (MGKSEKRVATHGVRCFAKIK) the chain is Cytoplasmic. The helical transmembrane segment at 21-40 (MFLLALTCAYVSKSLSGTYM) threads the bilayer. Topologically, residues 41 to 59 (NSMLTQIERQFGIPTSIVG) are extracellular. Residues 60–80 (LINGSFEIGNLLLIIFVSYFG) traverse the membrane as a helical segment. Topologically, residues 81 to 86 (TKLHRP) are cytoplasmic. The chain crosses the membrane as a helical span at residues 87 to 111 (IMIGVGCAVMGLGCFLISLPHFLMG). The Extracellular portion of the chain corresponds to 112-154 (QYEYETILPTSNVSSNSFFCVENRSQTLNPTQDPSECVKEMKS). 2 N-linked (GlcNAc...) asparagine glycosylation sites follow: asparagine 123 and asparagine 134. The chain crosses the membrane as a helical span at residues 155–183 (LMWIYVLVGNIIRGIGETPIMPLGISYIE). Over 184–202 (DFAKSENSPLYIGILETGM) the chain is Cytoplasmic. A helical membrane pass occupies residues 203-223 (TIGPLIGLLLASSCANIYVDI). The Extracellular portion of the chain corresponds to 224-241 (ESVNTDDLTITPTDTRWV). The helical transmembrane segment at 242-266 (GAWWIGFLVCAGVNILTSFPFFFFP) threads the bilayer. At 267-310 (KTLPKEGLQENVDGTENAKEKKHRKKAKEEKRGITKDFFVFMKS) the chain is on the cytoplasmic side. Residues 311–332 (LSCNPIYMLFILISVLQFNAFI) form a helical membrane-spanning segment. Residues 333-352 (NSFTFMPKYLEQQYGKSTAE) are Extracellular-facing. Residues 353–376 (VVFLMGLYMLPPICLGYLIGGLIM) form a helical membrane-spanning segment. Topologically, residues 377–380 (KKFK) are cytoplasmic. Residues 381 to 404 (VTVKKAAHLAFWLCLSEYLLSFLS) traverse the membrane as a helical segment. At 405–512 (YVMTCDNFPV…PDCANKLQYF (108 aa)) the chain is on the extracellular side. The region spanning 432 to 487 (NKVLADCNTRCNCSTNTWDPVCGDNGLAYMSACLAGCEKSVGTGTNMVFQNCSCIQ) is the Kazal-like domain. 3 cysteine pairs are disulfide-bonded: cysteine 438–cysteine 468, cysteine 444–cysteine 464, and cysteine 453–cysteine 485. Asparagine 443 is a glycosylation site (N-linked (GlcNAc...) asparagine). N-linked (GlcNAc...) asparagine glycans are attached at residues asparagine 482 and asparagine 491. The chain crosses the membrane as a helical span at residues 513-535 (LIIAIFGCFIYSLAGIPGYMVLL). At 536–544 (RCIKSEEKS) the chain is on the cytoplasmic side. Residues 545 to 570 (LGVGLHAFCIRILAGIPAPIYFGALI) traverse the membrane as a helical segment. At 571 to 604 (DRTCLHWGTLKCGEPGACRMYDINSFRRLYLGLP) the chain is on the extracellular side. A helical membrane pass occupies residues 605-622 (AALRGASFVPAFFILRLT). Residues 623 to 661 (RTFQFPGDIESSKTDHAEMKLTLKESECTEVLRSKVTED) are Cytoplasmic-facing. Serine 633 and serine 634 each carry phosphoserine.

It belongs to the organo anion transporter (TC 2.A.60) family. Highly expressed in brain, liver, and kidney but not expressed in heart, spleen, lung, skeletal muscle, and testis.

Its subcellular location is the cell membrane. It catalyses the reaction estrone 3-sulfate(out) = estrone 3-sulfate(in). It carries out the reaction taurocholate(out) = taurocholate(in). The catalysed reaction is prostaglandin E2(out) = prostaglandin E2(in). The enzyme catalyses L-thyroxine(out) = L-thyroxine(in). Mediates the Na(+)-independent transport of organic anions such as taurocholate, cholate, 17-beta-glucuronosyl estradiol, prostaglandin E2, estrone 3-sulfate, L-thyroxine (T4), the cardiac glycosides ouabain and digoxin and thyroid hormones. May play an especially important role in the brain accumulation and toxicity of digoxin and in the hepatobiliary and renal excretion of cardiac glycosides. Shows a pH-sensitive substrate specificity which may be ascribed to the protonation state of the binding site and leads to a stimulation of substrate transport in an acidic microenvironment. Hydrogencarbonate/HCO3(-) acts as the probable counteranion that exchanges for organic anions. In Rattus norvegicus (Rat), this protein is Solute carrier organic anion transporter family member 1A4 (Slco1a4).